Consider the following 72-residue polypeptide: U-poneritoxin(01)-Om7a (72 aa).

The signal sequence occupies residues 1–27 (MKPSGLTFAFLVVFMMAIMYNSVQVTA). Positions 28-45 (DADADAEAEALANALAEA) are excised as a propeptide.

This sequence belongs to the formicidae venom precursor-01 superfamily. Expressed by the venom gland.

The protein resides in the secreted. Functionally, peptide with unknown function that does not resemble any other pilosulin-like peptide and appears to have a coiled coil structure. This Odontomachus monticola (Trap-jaw ant) protein is U-poneritoxin(01)-Om7a.